The following is a 759-amino-acid chain: Xaa-Pro dipeptidyl-peptidase (759 aa).

Residues S347, D467, and H497 each act as charge relay system in the active site.

It belongs to the peptidase S15 family. In terms of assembly, homodimer.

The protein resides in the cytoplasm. The enzyme catalyses Hydrolyzes Xaa-Pro-|- bonds to release unblocked, N-terminal dipeptides from substrates including Ala-Pro-|-p-nitroanilide and (sequentially) Tyr-Pro-|-Phe-Pro-|-Gly-Pro-|-Ile.. In terms of biological role, removes N-terminal dipeptides sequentially from polypeptides having unsubstituted N-termini provided that the penultimate residue is proline. The protein is Xaa-Pro dipeptidyl-peptidase of Streptococcus gordonii (strain Challis / ATCC 35105 / BCRC 15272 / CH1 / DL1 / V288).